Here is a 360-residue protein sequence, read N- to C-terminus: Squamosa promoter-binding-like protein 7 (360 aa).

A compositionally biased stretch (gly residues) spans 74 to 89 (AQGSGGGGGGGGGGSA). Residues 74–98 (AQGSGGGGGGGGGGSADQGKRKEKA) form a disordered region. The SBP-type zinc-finger motif lies at 105–182 (VPRCQVEGCD…AGHNERRRRS (78 aa)). 8 residues coordinate Zn(2+): C108, C113, C130, H133, C149, C152, H156, and C168. Positions 165–181 (KKSCRRRLAGHNERRRR) match the Bipartite nuclear localization signal motif. Residues 172-182 (LAGHNERRRRS) show a composition bias toward basic residues. Disordered stretches follow at residues 172–196 (LAGH…AHPH), 261–306 (FFSD…HENQ), and 318–360 (TTAA…ARVV).

Expressed in young panicles.

The protein localises to the nucleus. In terms of biological role, trans-acting factor that binds specifically to the consensus nucleotide sequence 5'-TNCGTACAA-3'. May be involved in panicle development. The chain is Squamosa promoter-binding-like protein 7 (SPL7) from Oryza sativa subsp. japonica (Rice).